Reading from the N-terminus, the 231-residue chain is DNA mismatch repair protein MutH (231 aa).

It belongs to the MutH family.

It localises to the cytoplasm. Its function is as follows. Sequence-specific endonuclease that cleaves unmethylated GATC sequences. It is involved in DNA mismatch repair. In Pectobacterium atrosepticum (strain SCRI 1043 / ATCC BAA-672) (Erwinia carotovora subsp. atroseptica), this protein is DNA mismatch repair protein MutH.